The chain runs to 711 residues: Double-stranded RNA-specific editase 1 (711 aa).

The disordered stretch occupies residues 1–79 (MDIEDEENMS…RRKTPGPVLP (79 aa)). The span at 63–73 (SKYRLKKRRKT) shows a compositional bias: basic residues. One can recognise a DRBM 1 domain in the interval 78–144 (LPKNALMQLN…AEKALRSFVQ (67 aa)). Interaction with substrate RNA stretches follow at residues 83-88 (LMQLNE) and 104-105 (VH). Residue serine 149 is modified to Phosphoserine. The tract at residues 176–220 (LFNGFETPDKSEPPFYVGSNGDDSFSSSGDVSLSASPVPASLTQP) is disordered. Positions 192 to 213 (VGSNGDDSFSSSGDVSLSASPV) are enriched in low complexity. A DRBM 2 domain is found at 231–298 (PSGKNPVMIL…AQSALATVFN (68 aa)). Interaction with substrate RNA regions lie at residues 237–242 (VMILNE) and histidine 259. The region spanning 370-707 (SVSTGTKCIN…VEKPTEQDQF (338 aa)) is the A to I editase domain. Histidine 394 is a binding site for Zn(2+). Glutamate 396 serves as the catalytic Proton donor. 1D-myo-inositol hexakisphosphate is bound by residues arginine 400 and arginine 401. Zn(2+) is bound by residues cysteine 451 and cysteine 526. 1D-myo-inositol hexakisphosphate-binding residues include lysine 529, arginine 532, lysine 639, lysine 672, lysine 682, and lysine 700.

As to quaternary structure, homodimer. Homodimerization is essential for its catalytic activity. Can form heterodimers with isoform 5 of ADAR/ADAR1. Requires 1D-myo-inositol hexakisphosphate as cofactor. As to expression, brain and peripheral tissues.

It localises to the nucleus. Its subcellular location is the nucleolus. The enzyme catalyses adenosine in double-stranded RNA + H2O + H(+) = inosine in double-stranded RNA + NH4(+). Functionally, catalyzes the hydrolytic deamination of adenosine to inosine in double-stranded RNA (dsRNA) referred to as A-to-I RNA editing. This may affect gene expression and function in a number of ways that include mRNA translation by changing codons and hence the amino acid sequence of proteins; pre-mRNA splicing by altering splice site recognition sequences; RNA stability by changing sequences involved in nuclease recognition; genetic stability in the case of RNA virus genomes by changing sequences during viral RNA replication; and RNA structure-dependent activities such as microRNA production or targeting or protein-RNA interactions. Can edit both viral and cellular RNAs and can edit RNAs at multiple sites (hyper-editing) or at specific sites (site-specific editing). Its cellular RNA substrates include: bladder cancer-associated protein (BLCAP), neurotransmitter receptors for glutamate (GRIA2 and GRIK2) and serotonin (HTR2C), GABA receptor (GABRA3) and potassium voltage-gated channel (KCNA1). Site-specific RNA editing of transcripts encoding these proteins results in amino acid substitutions which consequently alter their functional activities. Edits GRIA2 at both the Q/R and R/G sites efficiently but converts the adenosine in hotspot1 much less efficiently. Can inhibit cell proliferation and migration and can stimulate exocytosis. This chain is Double-stranded RNA-specific editase 1 (Adarb1), found in Rattus norvegicus (Rat).